The following is a 474-amino-acid chain: MVFFRSVSAFTRLRSRVQGQQSSLSNSVRWIQMQSSTDLDLKSQLQELIPEQQDRLKKLKSEHGKVQLGNITVDMVIGGMRGMTGLLWETSLLDPEEGIRFRGLSIPECQKVLPTAQSGAEPLPEGLLWLLLTGKVPSKEQVEALSKDLANRAAVPDYVYNAIDALPSTAHPMTQFASGVMALQVQSEFQKAYENGIHKSKFWEPTYEDCLNLIARVPVVAAYVYRRMYKNGDSIPSDKSLDYGANFSHMLGFDDEKVKELMRLYITIHSDHEGGNVSAHTGHLVGSALSDPYLSFAAALNGLAGPLHGLANQEVLLWIKSVVEECGEDISKEQLKEYVWKTLNSGKVIPGYGHGVLRNTDPRYVCQREFALKHLPDDPLFQLVSKLYEVVPPVLTELGKVKNPWPNVDAHSGVLLNHYGLTEARYYTVLFGVSRSLGICSQLIWDRALGLALERPKSVTMDWLEAHCKKASSA.

A mitochondrion-targeting transit peptide spans 1-16 (MVFFRSVSAFTRLRSR). Active-site residues include H308, H354, and D409.

The protein belongs to the citrate synthase family. Homodimer.

It is found in the mitochondrion matrix. The enzyme catalyses oxaloacetate + acetyl-CoA + H2O = citrate + CoA + H(+). The protein operates within carbohydrate metabolism; tricarboxylic acid cycle; isocitrate from oxaloacetate: step 1/2. The chain is Citrate synthase 4, mitochondrial (CSY4) from Arabidopsis thaliana (Mouse-ear cress).